Here is a 126-residue protein sequence, read N- to C-terminus: Large ribosomal subunit protein uL29 (126 aa).

The protein belongs to the universal ribosomal protein uL29 family.

This chain is Large ribosomal subunit protein uL29 (rpl35), found in Dictyostelium discoideum (Social amoeba).